The chain runs to 238 residues: Probable transcriptional regulatory protein MGAS10750_Spy0264 (238 aa).

This sequence belongs to the TACO1 family. YeeN subfamily.

Its subcellular location is the cytoplasm. In Streptococcus pyogenes serotype M4 (strain MGAS10750), this protein is Probable transcriptional regulatory protein MGAS10750_Spy0264.